Consider the following 122-residue polypeptide: Large ribosomal subunit protein uL14c (122 aa).

Belongs to the universal ribosomal protein uL14 family. As to quaternary structure, part of the 50S ribosomal subunit.

The protein localises to the plastid. Its subcellular location is the chloroplast. In terms of biological role, binds to 23S rRNA. The chain is Large ribosomal subunit protein uL14c from Vitis vinifera (Grape).